A 635-amino-acid chain; its full sequence is BTB/POZ domain and ankyrin repeat-containing protein NPR2 (635 aa).

Residues 97 to 191 enclose the BTB domain; sequence SDADVDVADG…LYTGKLRPAP (95 aa). Positions 138–152 are enriched in gly residues; the sequence is AAGGGGGGGGGGGER. The segment at 138-157 is disordered; sequence AAGGGGGGGGGGGERTGGRP. The C2HC NPR-type zinc-finger motif lies at 194–208; that stretch reads VVSCADPMCPHDSCP. Zn(2+) is bound by residues cysteine 197, cysteine 202, histidine 204, and cysteine 207. 3 ANK repeats span residues 317–347, 349–376, and 380–409; these read KRVR…TLDD, NALH…NLNL, and RGYT…AVSQ. Positions 439 to 576 are salicylic acid-binding core (SBC); that stretch reads ESNKDRLCID…FLEDDLPDSP (138 aa). Arginine 484 is a salicylate binding site.

This sequence belongs to the plant 'ANKYRIN-BTB/POZ' family. 'NPR1-like' subfamily. As to quaternary structure, interacts with NRR. Interacts with TGAL1 and TGAL11.

The protein localises to the nucleus. Its pathway is protein modification; protein ubiquitination. Salicylic acid (SA)-binding substrate-specific adapter of an E3 ubiquitin-protein ligase complex (CUL3-RBX1-BTB) which mediates the ubiquitination and subsequent proteasomal degradation of target proteins. May be involved in regulating basal defense responses against pathogens, and may be involved in crosstalk between SA- and JA-dependent signaling pathways. Does not seem to be involved in defense response against the bacterial blight disease caused by Xanthomonas oryzae pv. oryzae (Xoo). Over-expression of NPR2/NH2 does not confer disease resistance to Xoo. This chain is BTB/POZ domain and ankyrin repeat-containing protein NPR2, found in Oryza sativa subsp. japonica (Rice).